The following is a 207-amino-acid chain: MSMQSTHPPKPEAPRLPPGIPESPSCQRRHTLPASEFRCLTPEDAVSAFEIEREAFISVLGVCPLDLDEIRHFLTLCPELSLGWFEEGCLVAFIIGSLWDKERLMQESLTLHRSGGHIAHLHVLAVHRAFRQQGRGPILLWRYLHHLGSQPAVRRAALMCEDALVPFYERFSFHAVGPCAITVGSLTFTELHCSLRDHPFLRRNSGC.

Positions 1–28 are disordered; the sequence is MSMQSTHPPKPEAPRLPPGIPESPSCQR. Position 31 is a phosphothreonine; by PKA (Thr-31). The 168-residue stretch at 35–202 folds into the N-acetyltransferase domain; sequence SEFRCLTPED…CSLRDHPFLR (168 aa). Leu-124 serves as a coordination point for substrate. Residues 124 to 126 and 132 to 137 each bind acetyl-CoA; these read LAV and QQGRGP. Met-159 contacts substrate. 168–170 serves as a coordination point for acetyl-CoA; the sequence is YER. Residue Ser-205 is modified to Phosphoserine.

This sequence belongs to the acetyltransferase family. AANAT subfamily. Monomer. Interacts with several 14-3-3 proteins, including YWHAB, YWHAE, YWHAG and YWHAZ, preferentially when phosphorylated at Thr-31. Phosphorylation on Ser-205 also allows binding to YWHAZ, but with lower affinity. The interaction with YWHAZ considerably increases affinity for arylalkylamines and acetyl-CoA and protects the enzyme from dephosphorylation and proteasomal degradation. It may also prevent thiol-dependent inactivation. In terms of processing, cAMP-dependent phosphorylation on both N-terminal Thr-31 and C-terminal Ser-205 regulates AANAT activity by promoting interaction with 14-3-3 proteins.

The protein resides in the cytoplasm. The catalysed reaction is a 2-arylethylamine + acetyl-CoA = an N-acetyl-2-arylethylamine + CoA + H(+). It participates in aromatic compound metabolism; melatonin biosynthesis; melatonin from serotonin: step 1/2. Functionally, controls the night/day rhythm of melatonin production in the pineal gland. Catalyzes the N-acetylation of serotonin into N-acetylserotonin, the penultimate step in the synthesis of melatonin. The sequence is that of Serotonin N-acetyltransferase (AANAT) from Pan troglodytes (Chimpanzee).